The primary structure comprises 119 residues: Large ribosomal subunit protein bL20 (119 aa).

This sequence belongs to the bacterial ribosomal protein bL20 family.

In terms of biological role, binds directly to 23S ribosomal RNA and is necessary for the in vitro assembly process of the 50S ribosomal subunit. It is not involved in the protein synthesizing functions of that subunit. The polypeptide is Large ribosomal subunit protein bL20 (Latilactobacillus sakei subsp. sakei (strain 23K) (Lactobacillus sakei subsp. sakei)).